Consider the following 722-residue polypeptide: Peroxisomal bifunctional enzyme (722 aa).

Positions 1 to 281 (MAEYLRLPHS…FAEKSANKWS (281 aa)) are enoyl-CoA hydratase / isomerase. A2 is subject to Blocked amino end (Ala). K38 carries the post-translational modification N6-succinyllysine. Residue G100 participates in substrate binding. Position 173 is an N6-acetyllysine; alternate (K173). N6-succinyllysine; alternate is present on K173. K182 is modified (N6-succinyllysine). K190 and K218 each carry N6-acetyllysine; alternate. Residues K190 and K218 each carry the N6-succinyllysine; alternate modification. The residue at position 241 (K241) is an N6-succinyllysine. K249 bears the N6-acetyllysine mark. The residue at position 253 (K253) is an N6-succinyllysine. At K275 the chain carries N6-acetyllysine; alternate. K275 is modified (N6-succinyllysine; alternate). An N6-succinyllysine mark is found at K279, K289, and K330. The 3-hydroxyacyl-CoA dehydrogenase stretch occupies residues 282-571 (TPSGASWKTA…DMLCEAGRFG (290 aa)). N6-acetyllysine occurs at positions 345, 359, and 463. K531 is subject to N6-succinyllysine. T547 is modified (phosphothreonine). N6-succinyllysine is present on K576. N6-acetyllysine; alternate is present on residues K583, K590, and K709. N6-succinyllysine; alternate occurs at positions 583, 590, and 709. The Microbody targeting signal signature appears at 720-722 (SKL). K721 is modified (N6-succinyllysine).

In the N-terminal section; belongs to the enoyl-CoA hydratase/isomerase family. This sequence in the C-terminal section; belongs to the 3-hydroxyacyl-CoA dehydrogenase family. Monomer. Post-translationally, acetylated, leading to enhanced enzyme activity. Acetylation is enhanced by up to 80% after treatment either with trichostin A (TCA) or with nicotinamide (NAM) with highest increase on Lys-345. Acetylation and enzyme activity increased by about 1.5% on addition of fatty acids.

It localises to the peroxisome. The enzyme catalyses a (3S)-3-hydroxyacyl-CoA = a (2E)-enoyl-CoA + H2O. The catalysed reaction is a 4-saturated-(3S)-3-hydroxyacyl-CoA = a (3E)-enoyl-CoA + H2O. It carries out the reaction a (3Z)-enoyl-CoA = a 4-saturated (2E)-enoyl-CoA. It catalyses the reaction a (3E)-enoyl-CoA = a 4-saturated (2E)-enoyl-CoA. The enzyme catalyses a (3S)-3-hydroxyacyl-CoA + NAD(+) = a 3-oxoacyl-CoA + NADH + H(+). The catalysed reaction is (2S,3S)-3-hydroxy-2-methylbutanoyl-CoA = (2E)-2-methylbut-2-enoyl-CoA + H2O. It carries out the reaction (3E,5Z)-tetradecadienoyl-CoA = (2E,5Z)-tetradecadienoyl-CoA. It catalyses the reaction (3E,5Z)-octadienoyl-CoA = (2E,5Z)-octadienoyl-CoA. The enzyme catalyses (3S)-hydroxydecanoyl-CoA + NAD(+) = 3-oxodecanoyl-CoA + NADH + H(+). The catalysed reaction is (3E)-decenoyl-CoA = (2E)-decenoyl-CoA. It carries out the reaction (3Z)-hexenoyl-CoA = (2E)-hexenoyl-CoA. It catalyses the reaction (3E)-hexenoyl-CoA = (2E)-hexenoyl-CoA. The enzyme catalyses (3S)-hydroxydecanoyl-CoA = (2E)-decenoyl-CoA + H2O. The catalysed reaction is (3S)-hydroxyhexanoyl-CoA = (2E)-hexenoyl-CoA + H2O. It carries out the reaction (3S)-hydroxyhexadecanoyl-CoA + NAD(+) = 3-oxohexadecanoyl-CoA + NADH + H(+). It catalyses the reaction (3S)-hydroxyhexadecanoyl-CoA = (2E)-hexadecenoyl-CoA + H2O. The enzyme catalyses (2E)-hexadecenedioyl-CoA + H2O = (3S)-hydroxyhexadecanedioyl-CoA. The catalysed reaction is (3S)-hydroxyhexadecanedioyl-CoA + NAD(+) = 3-oxohexadecanedioyl-CoA + NADH + H(+). It functions in the pathway lipid metabolism; fatty acid beta-oxidation. Enzyme activity enhanced by acetylation. In terms of biological role, peroxisomal trifunctional enzyme possessing 2-enoyl-CoA hydratase, 3-hydroxyacyl-CoA dehydrogenase, and delta 3, delta 2-enoyl-CoA isomerase activities. Catalyzes two of the four reactions of the long chain fatty acids peroxisomal beta-oxidation pathway. Can also use branched-chain fatty acids such as 2-methyl-2E-butenoyl-CoA as a substrate, which is hydrated into (2S,3S)-3-hydroxy-2-methylbutanoyl-CoA. Optimal isomerase for 2,5 double bonds into 3,5 form isomerization in a range of enoyl-CoA species. Also able to isomerize both 3-cis and 3-trans double bonds into the 2-trans form in a range of enoyl-CoA species. Regulates the amount of medium-chain dicarboxylic fatty acids which are essential regulators of all fatty acid oxidation pathways. Also involved in the degradation of long-chain dicarboxylic acids through peroxisomal beta-oxidation. The polypeptide is Peroxisomal bifunctional enzyme (Rattus norvegicus (Rat)).